The chain runs to 306 residues: MRIAFMGTPPFAVPTLAALHTAGHDIAAVYSQPPRPAQRGKKLQKSPVQLWAEEHGLPVRTPKSLKSDEAQAEFAALDLDVAVVAAYGLILPQAVLDAPREGCLNVHGSILPRWRGAAPVQRAILAGDAETGVTIMQMDAGLDTGAMRLIETTPVARKSAGLLTHELAEMGALMMRRVLSELHAFPPVPQPDEGVTYAAKIDKSEARLDFLVSAVQVERQVRAFNPAPGAFFELEGERYKVLAAEVVHPAETVAGAAPGVTIDDRLAIACNPGAIRVTRIQRAGKPAMEAGEMLRGRGIAKGTRLA.

109-112 provides a ligand contact to (6S)-5,6,7,8-tetrahydrofolate; it reads SILP.

It belongs to the Fmt family.

The catalysed reaction is L-methionyl-tRNA(fMet) + (6R)-10-formyltetrahydrofolate = N-formyl-L-methionyl-tRNA(fMet) + (6S)-5,6,7,8-tetrahydrofolate + H(+). Its function is as follows. Attaches a formyl group to the free amino group of methionyl-tRNA(fMet). The formyl group appears to play a dual role in the initiator identity of N-formylmethionyl-tRNA by promoting its recognition by IF2 and preventing the misappropriation of this tRNA by the elongation apparatus. This chain is Methionyl-tRNA formyltransferase, found in Sphingopyxis alaskensis (strain DSM 13593 / LMG 18877 / RB2256) (Sphingomonas alaskensis).